Consider the following 309-residue polypeptide: Homoserine kinase (309 aa).

An ATP-binding site is contributed by 91-101 (PIGSGLGSSAC).

The protein belongs to the GHMP kinase family. Homoserine kinase subfamily.

The protein localises to the cytoplasm. The catalysed reaction is L-homoserine + ATP = O-phospho-L-homoserine + ADP + H(+). Its pathway is amino-acid biosynthesis; L-threonine biosynthesis; L-threonine from L-aspartate: step 4/5. Functionally, catalyzes the ATP-dependent phosphorylation of L-homoserine to L-homoserine phosphate. This Edwardsiella ictaluri (strain 93-146) protein is Homoserine kinase.